The chain runs to 239 residues: Sugar fermentation stimulation protein homolog (239 aa).

This sequence belongs to the SfsA family.

In Rhizobium meliloti (strain 1021) (Ensifer meliloti), this protein is Sugar fermentation stimulation protein homolog.